Here is a 564-residue protein sequence, read N- to C-terminus: Pachytene checkpoint protein 2 (564 aa).

314-321 is an ATP binding site; the sequence is GPPGTGKT.

This sequence belongs to the AAA ATPase family. PCH2 subfamily.

The protein resides in the nucleus. It localises to the nucleolus. The protein localises to the chromosome. In terms of biological role, required for the pachytene checkpoint, the meiotic checkpoint that prevents chromosome segregation when defects in recombination and synaptonemal complex formation occurred. Represses meiotic recombination in the rDNA, probably by excluding the meiosis-specific protein HOP1 from the nucleolar region. The sequence is that of Pachytene checkpoint protein 2 (PCH2) from Saccharomyces cerevisiae (strain ATCC 204508 / S288c) (Baker's yeast).